The following is a 105-amino-acid chain: Phosphoribosyl-ATP pyrophosphatase (105 aa).

Belongs to the PRA-PH family.

The protein localises to the cytoplasm. It catalyses the reaction 1-(5-phospho-beta-D-ribosyl)-ATP + H2O = 1-(5-phospho-beta-D-ribosyl)-5'-AMP + diphosphate + H(+). The protein operates within amino-acid biosynthesis; L-histidine biosynthesis; L-histidine from 5-phospho-alpha-D-ribose 1-diphosphate: step 2/9. The protein is Phosphoribosyl-ATP pyrophosphatase of Ruthia magnifica subsp. Calyptogena magnifica.